The sequence spans 445 residues: E3 ubiquitin-protein ligase pellino homolog 3 (445 aa).

The tract at residues 1 to 24 is disordered; sequence MVLEGNPDVGSPRTSDLQHPGSQG. Ser11 carries the post-translational modification Phosphoserine. The segment covering 12–24 has biased composition (polar residues); sequence PRTSDLQHPGSQG.

Belongs to the pellino family. In terms of assembly, interacts with TRAF6, MAP3K14 and MAP3K7. Phosphorylated by IRAK1 enhancing its E3 ligase activity.

It catalyses the reaction S-ubiquitinyl-[E2 ubiquitin-conjugating enzyme]-L-cysteine + [acceptor protein]-L-lysine = [E2 ubiquitin-conjugating enzyme]-L-cysteine + N(6)-ubiquitinyl-[acceptor protein]-L-lysine.. It participates in protein modification; protein ubiquitination. E3 ubiquitin ligase catalyzing the covalent attachment of ubiquitin moieties onto substrate proteins. Involved in the TLR and IL-1 signaling pathways via interaction with the complex containing IRAK kinases and TRAF6. Mediates 'Lys-63'-linked polyubiquitination of IRAK1. Can activate AP1/JUN and ELK1. Acts as a regulator of innate immunity by mediating 'Lys-63'-linked polyubiquitination of RIPK2 downstream of NOD1 and NOD2, thereby transforming RIPK2 into a scaffolding protein for downstream effectors, ultimately leading to activation of the NF-kappa-B and MAP kinases signaling. Catalyzes 'Lys-63'-linked polyubiquitination of RIPK2 in parallel of XIAP. The chain is E3 ubiquitin-protein ligase pellino homolog 3 from Mus musculus (Mouse).